A 206-amino-acid chain; its full sequence is Pyrrolidone-carboxylate peptidase (206 aa).

Active-site residues include Glu-76, Cys-139, and His-163.

This sequence belongs to the peptidase C15 family. Homotetramer.

The protein resides in the cytoplasm. It carries out the reaction Release of an N-terminal pyroglutamyl group from a polypeptide, the second amino acid generally not being Pro.. Removes 5-oxoproline from various penultimate amino acid residues except L-proline. This is Pyrrolidone-carboxylate peptidase (pcp) from Pyrococcus horikoshii (strain ATCC 700860 / DSM 12428 / JCM 9974 / NBRC 100139 / OT-3).